We begin with the raw amino-acid sequence, 275 residues long: Dermonecrotic toxin LarSicTox-alphaIII1 (275 aa).

Histidine 5 is an active-site residue. Mg(2+) is bound by residues glutamate 25 and aspartate 27. The active-site Nucleophile is the histidine 41. 2 disulfides stabilise this stretch: cysteine 45–cysteine 51 and cysteine 47–cysteine 190. Aspartate 85 is a Mg(2+) binding site. N-linked (GlcNAc...) asparagine glycosylation occurs at asparagine 252.

Belongs to the arthropod phospholipase D family. Class II subfamily. Mg(2+) is required as a cofactor. In terms of tissue distribution, expressed by the venom gland.

The protein resides in the secreted. It carries out the reaction an N-(acyl)-sphingosylphosphocholine = an N-(acyl)-sphingosyl-1,3-cyclic phosphate + choline. The enzyme catalyses an N-(acyl)-sphingosylphosphoethanolamine = an N-(acyl)-sphingosyl-1,3-cyclic phosphate + ethanolamine. The catalysed reaction is a 1-acyl-sn-glycero-3-phosphocholine = a 1-acyl-sn-glycero-2,3-cyclic phosphate + choline. It catalyses the reaction a 1-acyl-sn-glycero-3-phosphoethanolamine = a 1-acyl-sn-glycero-2,3-cyclic phosphate + ethanolamine. Dermonecrotic toxins cleave the phosphodiester linkage between the phosphate and headgroup of certain phospholipids (sphingolipid and lysolipid substrates), forming an alcohol (often choline) and a cyclic phosphate. This toxin acts on sphingomyelin (SM). It may also act on ceramide phosphoethanolamine (CPE), lysophosphatidylcholine (LPC) and lysophosphatidylethanolamine (LPE), but not on lysophosphatidylserine (LPS), and lysophosphatidylglycerol (LPG). It acts by transphosphatidylation, releasing exclusively cyclic phosphate products as second products. Induces dermonecrosis, hemolysis, increased vascular permeability, edema, inflammatory response, and platelet aggregation. The sequence is that of Dermonecrotic toxin LarSicTox-alphaIII1 from Loxosceles arizonica (Arizona brown spider).